The primary structure comprises 173 residues: Probable DNA-directed RNA polymerase subunit delta (173 aa).

The HTH HARE-type domain occupies 14–81 (NSFIDLAYMA…GEYMWGLRDW (68 aa)). Residues 113–173 (LLGEDEVEDE…DEFDDEEEEE (61 aa)) are disordered. The span at 115 to 173 (GEDEVEDELDLLPSDGDEENVDTEDEEVEDELDEAGLVVEPDEEFEDEEDEFDDEEEEE) shows a compositional bias: acidic residues.

The protein belongs to the RpoE family. In terms of assembly, RNAP is composed of a core of 2 alpha, a beta and a beta' subunits. The core is associated with a delta subunit and one of several sigma factors.

Its function is as follows. Participates in both the initiation and recycling phases of transcription. In the presence of the delta subunit, RNAP displays an increased specificity of transcription, a decreased affinity for nucleic acids, and an increased efficiency of RNA synthesis because of enhanced recycling. The sequence is that of Probable DNA-directed RNA polymerase subunit delta from Macrococcus caseolyticus (strain JCSC5402) (Macrococcoides caseolyticum).